The sequence spans 210 residues: Probable GTP-binding protein EngB (210 aa).

The 175-residue stretch at 30 to 204 (QGYEVAFAGR…YKVLAGWMEL (175 aa)) folds into the EngB-type G domain. Residues 38–45 (GRSNAGKS), 64–68 (GRTQL), 82–85 (DLPG), 149–152 (TKAD), and 182–185 (LFSA) contribute to the GTP site. Ser45 and Thr66 together coordinate Mg(2+).

It belongs to the TRAFAC class TrmE-Era-EngA-EngB-Septin-like GTPase superfamily. EngB GTPase family. Mg(2+) is required as a cofactor.

Functionally, necessary for normal cell division and for the maintenance of normal septation. The sequence is that of Probable GTP-binding protein EngB from Pseudomonas putida (strain W619).